The chain runs to 594 residues: MNADFLGLLLLYLAILLCAAPLLGRHIRQAINGERTWLTAWGQPLERGLYRLAGVDPAAEMDWRRYAVAMLVFNVLGVLAVYALQRLQGWLPLNPAGLPGVAPDSALNTAISFVTNTNWQGYAGESTMSYLTQMLALTVQNFVSAATGIAVLIALVRGLARHSAATLGNFWADLVRATLYVLLPLSFILALALVSQGVVQNLDPYVEAQTVQAQQYETARLDAQGQPMTGPAGQPLTDTVVTRVQTLPMGPVASQEAIKLLGTNGGGFFNANSAHPYENPNAWSNLLEMLAILLIPAALCWTFGEMVGSRRQGVAILAAMTVLFAGFAASAAYFEQQPTPALRQAEAALLADGGNLEGKEARFGVAATALFATVTTAASCGAVNGMHDSFSALGGVTPLLQMQLGEVIYGGVGSGLYGMLAFAILAVFIAGLMIGRTPEYLGKKIEALDMQMVALVILATPALVLAGTAVAVLADAGRAGVLNPGAHGFSEILYAMSSAANNNGSAFAGLSANTPFYNVLLGLAMWFGRYTIIVAILALAGSLAAKPRLPASVGGMPTTGPLFVALLVGAVLLVGALTYVPALALGPVAEHLQP.

The next 10 helical transmembrane spans lie at 3–23 (ADFL…APLL), 67–87 (AVAM…LQRL), 136–156 (ALTV…IALV), 179–199 (LYVL…QGVV), 287–307 (LEML…GEMV), 314–334 (VAIL…AAYF), 415–435 (GLYG…LMIG), 453–473 (VALV…VAVL), 519–539 (VLLG…ILAL), and 562–582 (LFVA…YVPA).

It belongs to the KdpA family. The system is composed of three essential subunits: KdpA, KdpB and KdpC.

It localises to the cell inner membrane. Functionally, part of the high-affinity ATP-driven potassium transport (or Kdp) system, which catalyzes the hydrolysis of ATP coupled with the electrogenic transport of potassium into the cytoplasm. This subunit binds the periplasmic potassium ions and delivers the ions to the membrane domain of KdpB through an intramembrane tunnel. This chain is Potassium-transporting ATPase potassium-binding subunit, found in Bordetella pertussis (strain Tohama I / ATCC BAA-589 / NCTC 13251).